A 302-amino-acid chain; its full sequence is L-threonate dehydrogenase (302 aa).

NAD(+) is bound by residues 7 to 35 and T102; that span reads FHVG…TWGA. Residue K178 is part of the active site. K246 is an NAD(+) binding site.

Belongs to the HIBADH-related family. L-threonate dehydrogenase subfamily.

It carries out the reaction L-threonate + NAD(+) = 2-dehydro-L-erythronate + NADH + H(+). Catalyzes oxidation of L-threonate to 2-oxo-tetronate. Can use either NAD(+) or NADP(+) as cosubstrate, with a preference for NAD(+). This Escherichia coli O6:H1 (strain CFT073 / ATCC 700928 / UPEC) protein is L-threonate dehydrogenase.